A 191-amino-acid polypeptide reads, in one-letter code: Transcriptional regulator MET32 (191 aa).

Residues 70–96 (KKENALPKPPKSSKSKPQDRRNSTGEK) are disordered. Positions 85–96 (KPQDRRNSTGEK) are enriched in basic and acidic residues. Residues 98–120 (FKCAKCSLEFSRSSDLRRHEKTH) form a C2H2-type 1 zinc finger. Residues 126-150 (NICPQCGKGFARKDALKRHYDTLTC) form a C2H2-type 2; atypical zinc finger.

In terms of assembly, interacts with MET4 and MET28.

The protein resides in the cytoplasm. The protein localises to the nucleus. Auxiliary transcriptional regulator of sulfur amino acid metabolism. Involved in the transcriptional activation of MET28. This Saccharomyces cerevisiae (strain ATCC 204508 / S288c) (Baker's yeast) protein is Transcriptional regulator MET32 (MET32).